A 203-amino-acid polypeptide reads, in one-letter code: uncharacterized protein (203 aa).

An N-terminal signal peptide occupies residues 1–20; that stretch reads MDELILPILILLFLVFVAYF.

This is an uncharacterized protein from Pasteurella multocida (strain Pm70).